Here is a 448-residue protein sequence, read N- to C-terminus: Squalene synthase ERG9 (448 aa).

Residues 420-440 traverse the membrane as a helical segment; sequence RIEPGNFNCNVVLFGIGALIL.

The protein belongs to the phytoene/squalene synthase family. Mg(2+) serves as cofactor.

It is found in the endoplasmic reticulum membrane. It localises to the microsome. It catalyses the reaction 2 (2E,6E)-farnesyl diphosphate + NADPH + H(+) = squalene + 2 diphosphate + NADP(+). The catalysed reaction is 2 (2E,6E)-farnesyl diphosphate + NADH + H(+) = squalene + 2 diphosphate + NAD(+). Its pathway is terpene metabolism; lanosterol biosynthesis; lanosterol from farnesyl diphosphate: step 1/3. Functionally, squalene synthase; part of the third module of ergosterol biosynthesis pathway that includes the late steps of the pathway. ERG9 produces squalene from 2 farnesyl pyrophosphate moieties. The third module or late pathway involves the ergosterol synthesis itself through consecutive reactions that mainly occur in the endoplasmic reticulum (ER) membrane. Firstly, the squalene synthase ERG9 catalyzes the condensation of 2 farnesyl pyrophosphate moieties to form squalene, which is the precursor of all steroids. Squalene synthase is crucial for balancing the incorporation of farnesyl diphosphate (FPP) into sterol and nonsterol isoprene synthesis. Secondly, the squalene epoxidase ERG1 catalyzes the stereospecific oxidation of squalene to (S)-2,3-epoxysqualene, which is considered to be a rate-limiting enzyme in steroid biosynthesis. Then, the lanosterol synthase ERG7 catalyzes the cyclization of (S)-2,3 oxidosqualene to lanosterol, a reaction that forms the sterol core. In the next steps, lanosterol is transformed to zymosterol through a complex process involving various demethylation, reduction and desaturation reactions. The lanosterol 14-alpha-demethylase ERG11 (also known as CYP51) catalyzes C14-demethylation of lanosterol to produce 4,4'-dimethyl cholesta-8,14,24-triene-3-beta-ol, which is critical for ergosterol biosynthesis. The C-14 reductase ERG24 reduces the C14=C15 double bond of 4,4-dimethyl-cholesta-8,14,24-trienol to produce 4,4-dimethyl-cholesta-8,24-dienol. 4,4-dimethyl-cholesta-8,24-dienol is substrate of the C-4 demethylation complex ERG25-ERG26-ERG27 in which ERG25 catalyzes the three-step monooxygenation required for the demethylation of 4,4-dimethyl and 4alpha-methylsterols, ERG26 catalyzes the oxidative decarboxylation that results in a reduction of the 3-beta-hydroxy group at the C-3 carbon to an oxo group, and ERG27 is responsible for the reduction of the keto group on the C-3. ERG28 has a role as a scaffold to help anchor ERG25, ERG26 and ERG27 to the endoplasmic reticulum and ERG29 regulates the activity of the iron-containing C4-methylsterol oxidase ERG25. Then, the sterol 24-C-methyltransferase ERG6 catalyzes the methyl transfer from S-adenosyl-methionine to the C-24 of zymosterol to form fecosterol. The C-8 sterol isomerase ERG2 catalyzes the reaction which results in unsaturation at C-7 in the B ring of sterols and thus converts fecosterol to episterol. The sterol-C5-desaturase ERG3 then catalyzes the introduction of a C-5 double bond in the B ring to produce 5-dehydroepisterol. The C-22 sterol desaturase ERG5 further converts 5-dehydroepisterol into ergosta-5,7,22,24(28)-tetraen-3beta-ol by forming the C-22(23) double bond in the sterol side chain. Finally, ergosta-5,7,22,24(28)-tetraen-3beta-ol is substrate of the C-24(28) sterol reductase ERG4 to produce ergosterol. This Candida albicans (Yeast) protein is Squalene synthase ERG9.